Reading from the N-terminus, the 1012-residue chain is Structural polyprotein (1012 aa).

A divalent metal cation is bound at residue D30. The 243-residue stretch at 513 to 755 (ADKGYEVVAN…AGRQYHLAMA (243 aa)) folds into the Peptidase S50 domain. Residue S652 is the Nucleophile of the active site. K692 is an active-site residue. The interval 970–1012 (MEMKHRNPRRAPPKPKPKPNAPTQRPPGRLGRWIRTVSDEDLE) is disordered. The span at 975–986 (RNPRRAPPKPKP) shows a compositional bias: basic residues. The interaction with VP1 protein stretch occupies residues 1003–1012 (IRTVSDEDLE).

In terms of assembly, homotrimer. A central divalent metal stabilizes the VP2 trimer. Interacts with host ITGA4/ITGB1. As to quaternary structure, homodimer. Interacts (via C-terminus) with VP1 in the cytoplasm. Interacts with VP2. In terms of processing, specific enzymatic cleavages yield mature proteins. The capsid assembly seems to be regulated by polyprotein processing. The protease VP4 cleaves itself off the polyprotein, thus releasing pre-VP2 and VP3 within the infected cell. During capsid assembly, the C-terminus of pre-VP2 is further processed by VP4, giving rise to VP2, the external capsid protein and three small peptides that all stay closely associated with the capsid.

The protein localises to the virion. Its subcellular location is the host cytoplasm. Functionally, capsid protein VP2 self assembles to form an icosahedral capsid with a T=13 symmetry, about 70 nm in diameter, and consisting of 260 VP2 trimers. The capsid encapsulates the genomic dsRNA. VP2 is also involved in attachment and entry into the host cell by interacting with host ITGA4/ITGB1. Its function is as follows. The precursor of VP2 plays an important role in capsid assembly. First, pre-VP2 and VP2 oligomers assemble to form a procapsid. Then, the pre-VP2 intermediates may be processed into VP2 proteins by proteolytic cleavage mediated by VP4 to obtain the mature virion. The final capsid is composed of pentamers and hexamers but VP2 has a natural tendency to assemble into all-pentameric structures. Therefore pre-VP2 may be required to allow formation of the hexameric structures. Protease VP4 is a serine protease that cleaves the polyprotein into its final products. Pre-VP2 is first partially cleaved, and may be completely processed by VP4 upon capsid maturation. In terms of biological role, capsid protein VP3 plays a key role in virion assembly by providing a scaffold for the capsid made of VP2. May self-assemble to form a T=4-like icosahedral inner-capsid composed of at least 180 trimers. Plays a role in genomic RNA packaging by recruiting VP1 into the capsid and interacting with the dsRNA genome segments to form a ribonucleoprotein complex. Additionally, the interaction of the VP3 C-terminal tail with VP1 removes the inherent structural blockade of the polymerase active site. Thus, VP3 can also function as a transcriptional activator. Functionally, structural peptide 1 is a small peptide derived from pre-VP2 C-terminus. It destabilizes and perforates cell membranes, suggesting a role during entry. Its function is as follows. Structural peptide 2 is a small peptide derived from pVP2 C-terminus. It is not essential for the virus viability, but viral growth is affected when missing. Structural peptide 3 is a small peptide derived from pVP2 C-terminus. It is not essential for the virus viability, but viral growth is affected when missing. In terms of biological role, structural peptide 4 is a small peptide derived from pVP2 C-terminus. It is essential for the virus viability. The protein is Structural polyprotein of Avian infectious bursal disease virus (strain E) (IBDV).